The primary structure comprises 81 residues: Cytochrome c oxidase subunit 7B2, mitochondrial (81 aa).

A mitochondrion-targeting transit peptide spans 1-25 (MMFPLARNALSSLKIQSILQSMARH). At 26–33 (SHVKHSPD) the chain is on the mitochondrial matrix side. The helical transmembrane segment at 34-60 (FHDKYGNAVLASGTAFCVATWVFTATQ) threads the bilayer. Over 61–81 (IGIEWNLSPVGRVTPKEWKHQ) the chain is Mitochondrial intermembrane.

Belongs to the cytochrome c oxidase VIIb family. Component of the cytochrome c oxidase (complex IV, CIV), a multisubunit enzyme composed of 14 subunits. The complex is composed of a catalytic core of 3 subunits MT-CO1, MT-CO2 and MT-CO3, encoded in the mitochondrial DNA, and 11 supernumerary subunits COX4I, COX5A, COX5B, COX6A, COX6B, COX6C, COX7A, COX7B, COX7C, COX8 and NDUFA4, which are encoded in the nuclear genome. The complex exists as a monomer or a dimer and forms supercomplexes (SCs) in the inner mitochondrial membrane with NADH-ubiquinone oxidoreductase (complex I, CI) and ubiquinol-cytochrome c oxidoreductase (cytochrome b-c1 complex, complex III, CIII), resulting in different assemblies (supercomplex SCI(1)III(2)IV(1) and megacomplex MCI(2)III(2)IV(2)).

It localises to the mitochondrion inner membrane. Its pathway is energy metabolism; oxidative phosphorylation. Its function is as follows. Component of the cytochrome c oxidase, the last enzyme in the mitochondrial electron transport chain which drives oxidative phosphorylation. The respiratory chain contains 3 multisubunit complexes succinate dehydrogenase (complex II, CII), ubiquinol-cytochrome c oxidoreductase (cytochrome b-c1 complex, complex III, CIII) and cytochrome c oxidase (complex IV, CIV), that cooperate to transfer electrons derived from NADH and succinate to molecular oxygen, creating an electrochemical gradient over the inner membrane that drives transmembrane transport and the ATP synthase. Cytochrome c oxidase is the component of the respiratory chain that catalyzes the reduction of oxygen to water. Electrons originating from reduced cytochrome c in the intermembrane space (IMS) are transferred via the dinuclear copper A center (CU(A)) of subunit 2 and heme A of subunit 1 to the active site in subunit 1, a binuclear center (BNC) formed by heme A3 and copper B (CU(B)). The BNC reduces molecular oxygen to 2 water molecules using 4 electrons from cytochrome c in the IMS and 4 protons from the mitochondrial matrix. This is Cytochrome c oxidase subunit 7B2, mitochondrial (COX7B2) from Homo sapiens (Human).